The sequence spans 224 residues: Germin-like protein 8-10 (224 aa).

Positions 1–22 (MASPSICLLAALLALVSWQAIA) are cleaved as a signal peptide. A disulfide bridge links Cys32 with Cys47. The 151-residue stretch at 62 to 212 (AMLDTPRKTN…AFQVEKGTID (151 aa)) folds into the Cupin type-1 domain. An N-linked (GlcNAc...) asparagine glycan is attached at Asn76. Positions 109, 111, and 116 each coordinate Mn(2+). An N-linked (GlcNAc...) asparagine glycan is attached at Asn135. His157 serves as a coordination point for Mn(2+).

The protein belongs to the germin family. Oligomer (believed to be a pentamer but probably hexamer).

It is found in the secreted. Its subcellular location is the extracellular space. The protein resides in the apoplast. Plays a role in broad-spectrum disease resistance. Probably has no oxalate oxidase activity even if the active site is conserved. The polypeptide is Germin-like protein 8-10 (GLP2) (Oryza sativa subsp. japonica (Rice)).